A 165-amino-acid polypeptide reads, in one-letter code: Large ribosomal subunit protein uL10 (165 aa).

Belongs to the universal ribosomal protein uL10 family. Part of the ribosomal stalk of the 50S ribosomal subunit. The N-terminus interacts with L11 and the large rRNA to form the base of the stalk. The C-terminus forms an elongated spine to which L12 dimers bind in a sequential fashion forming a multimeric L10(L12)X complex.

Functionally, forms part of the ribosomal stalk, playing a central role in the interaction of the ribosome with GTP-bound translation factors. The protein is Large ribosomal subunit protein uL10 of Mycoplasma mycoides subsp. mycoides SC (strain CCUG 32753 / NCTC 10114 / PG1).